Here is a 299-residue protein sequence, read N- to C-terminus: Ribonuclease H2 subunit A (299 aa).

N-acetylmethionine is present on methionine 1. One can recognise an RNase H type-2 domain in the interval 28-250; sequence PCVLGVDEAG…AQTILEKEAE (223 aa). Aspartate 34, glutamate 35, and aspartate 141 together coordinate a divalent metal cation. 2 positions are modified to phosphothreonine: threonine 204 and threonine 216. Phosphoserine is present on residues serine 257 and serine 277.

The protein belongs to the RNase HII family. Eukaryotic subfamily. As to quaternary structure, the RNase H2 complex is a heterotrimer composed of the catalytic subunit RNASEH2A and the non-catalytic subunits RNASEH2B and RNASEH2C. Mn(2+) is required as a cofactor. Mg(2+) serves as cofactor.

It localises to the nucleus. The enzyme catalyses Endonucleolytic cleavage to 5'-phosphomonoester.. In terms of biological role, catalytic subunit of RNase HII, an endonuclease that specifically degrades the RNA of RNA:DNA hybrids. Participates in DNA replication, possibly by mediating the removal of lagging-strand Okazaki fragment RNA primers during DNA replication. Mediates the excision of single ribonucleotides from DNA:RNA duplexes. The protein is Ribonuclease H2 subunit A (RNASEH2A) of Homo sapiens (Human).